The primary structure comprises 231 residues: Orotidine 5'-phosphate decarboxylase (231 aa).

Residues Asp11, Lys32, 59–68, Thr118, Arg180, Gln189, Gly209, and Arg210 contribute to the substrate site; that span reads DLKFHDIPNT. Residue Lys61 is the Proton donor of the active site.

The protein belongs to the OMP decarboxylase family. Type 1 subfamily. As to quaternary structure, homodimer.

The catalysed reaction is orotidine 5'-phosphate + H(+) = UMP + CO2. The protein operates within pyrimidine metabolism; UMP biosynthesis via de novo pathway; UMP from orotate: step 2/2. Its function is as follows. Catalyzes the decarboxylation of orotidine 5'-monophosphate (OMP) to uridine 5'-monophosphate (UMP). This chain is Orotidine 5'-phosphate decarboxylase, found in Synechocystis sp. (strain ATCC 27184 / PCC 6803 / Kazusa).